An 83-amino-acid polypeptide reads, in one-letter code: Three-finger toxin MALT0066C (83 aa).

The N-terminal stretch at 1–21 (MKTLLLTLVVVTIVCLDFGHT) is a signal peptide. Cystine bridges form between cysteine 24–cysteine 45, cysteine 38–cysteine 62, cysteine 64–cysteine 75, and cysteine 76–cysteine 81.

It belongs to the three-finger toxin family. Short-chain subfamily. Type I alpha-neurotoxin sub-subfamily. As to quaternary structure, dimer. As to expression, expressed by the venom gland.

The protein localises to the secreted. In terms of biological role, binds to muscle nicotinic acetylcholine receptor (nAChR) and inhibit acetylcholine from binding to the receptor, thereby impairing neuromuscular transmission. In Micrurus altirostris (Uruguayan coral snake), this protein is Three-finger toxin MALT0066C.